A 140-amino-acid polypeptide reads, in one-letter code: MAKKVIGKIKLQIPAGKANPAPPVGPALGQHGVNIMEFCKAFNAKTQDQAGMIIPVEITVYADRSFDFITKTPPASDLLKKAAGLERASGQPNINKVGTVTKEDIKEIAELKMPDLNAGSLEAAMRMIEGTARSMGIVVK.

Belongs to the universal ribosomal protein uL11 family. In terms of assembly, part of the ribosomal stalk of the 50S ribosomal subunit. Interacts with L10 and the large rRNA to form the base of the stalk. L10 forms an elongated spine to which L12 dimers bind in a sequential fashion forming a multimeric L10(L12)X complex. In terms of processing, one or more lysine residues are methylated.

Forms part of the ribosomal stalk which helps the ribosome interact with GTP-bound translation factors. The sequence is that of Large ribosomal subunit protein uL11 from Halothermothrix orenii (strain H 168 / OCM 544 / DSM 9562).